The chain runs to 427 residues: SAC3 domain-containing protein 1 (427 aa).

2 stretches are compositionally biased toward basic and acidic residues: residues 1–10 and 117–127; these read MGRFKGENRS and ADPKRTVKEYS. Disordered regions lie at residues 1–53 and 101–143; these read MGRF…QDAV and LHRL…LLRP. Pro residues predominate over residues 134–143; it reads PRPPPSLLRP. Positions 229–397 constitute a PCI domain; sequence QVQEGFGSLR…EGLPPPGAYH (169 aa). Position 425 is a phosphoserine (Ser-425).

Belongs to the SAC3 family. As to quaternary structure, may be part of a SEM1-containing complex. As to expression, present in spleen cells (at protein level).

It localises to the cytoplasm. Its subcellular location is the cytoskeleton. The protein resides in the microtubule organizing center. It is found in the centrosome. The protein localises to the spindle. Involved in centrosome duplication and mitotic progression. This chain is SAC3 domain-containing protein 1 (Sac3d1), found in Mus musculus (Mouse).